Here is a 976-residue protein sequence, read N- to C-terminus: Vacuolar membrane protease (976 aa).

At 1 to 15 (MKLKSVFRSVLKYRK) the chain is on the cytoplasmic side. A helical transmembrane segment spans residues 16 to 36 (TNLSLLLLITYSIITLLYIFD). At 37-359 (HERYKLNLPK…KFFVISAKTL (323 aa)) the chain is on the vacuolar side. Asparagine 96 and asparagine 121 each carry an N-linked (GlcNAc...) asparagine glycan. Residues histidine 156 and aspartate 168 each contribute to the Zn(2+) site. An N-linked (GlcNAc...) asparagine glycan is attached at asparagine 189. Glutamate 200 (proton acceptor) is an active-site residue. Glutamate 201 contributes to the Zn(2+) binding site. Asparagine 217 carries N-linked (GlcNAc...) asparagine glycosylation. Glutamate 226 and histidine 300 together coordinate Zn(2+). A helical membrane pass occupies residues 360 to 380 (FYWNCIFLLVSPVVAIGLYLI). Over 381 to 392 (SRDRMTWKSYSW) the chain is Cytoplasmic. A helical membrane pass occupies residues 393–412 (LSWTRFPLSLAAGIIVQKLF). Residues 413–428 (SNDIIRSNPLTFSRNY) are Vacuolar-facing. Residues 429–449 (FWPISAFFTQVIFTSYVLINC) form a helical membrane-spanning segment. The Cytoplasmic segment spans residues 450 to 461 (SNFFFPCADMKS). The helical transmembrane segment at 462–482 (LSIIELFIILWTILLFTSKLL) threads the bilayer. The Vacuolar portion of the chain corresponds to 483–496 (YSSDYRYTGLYPLS). The chain crosses the membrane as a helical span at residues 497 to 517 (IFFLLSTIAAILRLLALALGM). Residues 518–627 (RTRKRLGREC…NSLKLEYTDY (110 aa)) lie on the Cytoplasmic side of the membrane. The tract at residues 528-610 (RDHHSNYSSH…PLLKGSNSME (83 aa)) is disordered. A compositionally biased stretch (polar residues) spans 549 to 558 (NLEQPQDQLT). The span at 559 to 570 (SSQDDQASIQDD) shows a compositional bias: low complexity. Positions 582-601 (NVDEDHGMDSSSQQHDERVP) are enriched in basic and acidic residues. A helical transmembrane segment spans residues 628–648 (AWIIQFLLIVPIPSFILFNSV). Topologically, residues 649 to 668 (DVIMDALNHTVQEGSKATFD) are vacuolar. Asparagine 656 carries N-linked (GlcNAc...) asparagine glycosylation. Residues 669–689 (VLRFGMVGSILIALPILPFFY) traverse the membrane as a helical segment. Topologically, residues 690 to 692 (KVN) are cytoplasmic. The chain crosses the membrane as a helical span at residues 693 to 713 (YITISLTALLFLISASKTLLV). The Vacuolar segment spans residues 714–976 (HPFTNSNPLK…LVIVKDAIIL (263 aa)). N-linked (GlcNAc...) asparagine glycans are attached at residues asparagine 768, asparagine 796, asparagine 811, asparagine 866, and asparagine 937.

This sequence belongs to the peptidase M28 family. It depends on Zn(2+) as a cofactor. Post-translationally, N-glycosylated.

It localises to the vacuole membrane. Its function is as follows. May be involved in vacuolar sorting and osmoregulation. This Saccharomyces cerevisiae (strain ATCC 204508 / S288c) (Baker's yeast) protein is Vacuolar membrane protease.